Reading from the N-terminus, the 295-residue chain is Small ribosomal subunit protein uS2 (295 aa).

It belongs to the universal ribosomal protein uS2 family. In terms of assembly, component of the small ribosomal subunit. Mature ribosomes consist of a small (40S) and a large (60S) subunit. The 40S subunit contains about 33 different proteins and 1 molecule of RNA (18S). The 60S subunit contains about 49 different proteins and 3 molecules of RNA (25S, 5.8S and 5S). Interacts with RPS21.

It is found in the cytoplasm. In terms of biological role, required for the assembly and/or stability of the 40S ribosomal subunit. Required for the processing of the 20S rRNA-precursor to mature 18S rRNA in a late step of the maturation of 40S ribosomal subunits. This Paracoccidioides brasiliensis (strain Pb18) protein is Small ribosomal subunit protein uS2.